The following is a 1426-amino-acid chain: Nephrocystin-4 (1426 aa).

Ser142 carries the post-translational modification Phosphoserine. Disordered regions lie at residues 450 to 536 (GSEE…SPAQ) and 896 to 935 (RQGK…GRRG). The span at 474 to 486 (KPPTSPSSPPAPV) shows a compositional bias: pro residues. The segment covering 503–536 (SISQLAASPRSPTQHCLARPTSQLPHGSQASPAQ) has biased composition (polar residues). The segment at 823-1426 (LTLANVGHPC…EAFCVKVIYQ (604 aa)) is sufficient for basal bodies localization.

It belongs to the NPHP4 family. Interacts with NPHP1. Interacts with NPHP1 and RPGRIP1L/NPHP8; NPHP1, NPHP4 and RPGRIP1L are proposed to form a functional NPHP1-4-8 module localized to cell-cell contacts and the ciliary transition zone; NPHP4 mediates the interaction between NPHP1 and RPGRIP1L. Interacts with IQCB1/NPHP5; the interaction likely requires additional interactors. Interacts with RPGRIP1, CEP164, JADE1, PALS1, INADL, PARD6A, INVS, DVL2, LATS1. Interacts with INTU; INTU mediates the interaction between NPHP4 and DAAM1. Interacts with SPATA7. Expressed in kidney, skeletal muscle, heart and liver, and to a lesser extent in brain and lung.

It localises to the cytoplasm. Its subcellular location is the cytoskeleton. The protein localises to the cilium basal body. It is found in the microtubule organizing center. The protein resides in the centrosome. It localises to the cell junction. Its subcellular location is the tight junction. The protein localises to the nucleus. Functionally, involved in the organization of apical junctions; the function is proposed to implicate a NPHP1-4-8 module. Does not seem to be strictly required for ciliogenesis. Required for building functional cilia. Involved in the organization of the subapical actin network in multiciliated epithelial cells. Seems to recruit INT to basal bodies of motile cilia which subsequently interacts with actin-modifying proteins such as DAAM1. In cooperation with INVS may down-regulate the canonical Wnt pathway and promote the Wnt-PCP pathway by regulating expression and subcellular location of disheveled proteins. Stabilizes protein levels of JADE1 and promotes its translocation to the nucleus leading to cooperative inhibition of canonical Wnt signaling. Acts as a negative regulator of the hippo pathway by association with LATS1 and modifying LATS1-dependent phosphorylation and localization of WWTR1/TAZ. This is Nephrocystin-4 (NPHP4) from Homo sapiens (Human).